The primary structure comprises 327 residues: Cyclin-A3-3 (327 aa).

It belongs to the cyclin family. Cyclin AB subfamily.

The sequence is that of Cyclin-A3-3 (CYCA3-3) from Arabidopsis thaliana (Mouse-ear cress).